A 402-amino-acid polypeptide reads, in one-letter code: Zinc finger protein CONSTANS-LIKE 14 (402 aa).

8 residues coordinate Zn(2+): Cys-12, Cys-15, Cys-35, His-40, Cys-55, Cys-58, Cys-78, and His-83. The B box-type 1; atypical zinc-finger motif lies at 12–54 (CEFCGERTAVLFCRADTAKLCLPCDQHVHSANLLSRKHVRSQI). Residues 55-97 (CDNCSKEPVSVRCFTDNLVLCQECDWDVHGSCSSSATHERSAV) form a B box-type 2; atypical zinc finger. The segment at 287–322 (SYQQEDSVHSTSTKGQETSKSNNIPAAIHSHKSSND) is disordered. The span at 295–310 (HSTSTKGQETSKSNNI) shows a compositional bias: polar residues. Residues 345–372 (VTNADLEQMAQNRDNAMQRYKEKKKTRR) are a coiled coil. Positions 357 to 399 (RDNAMQRYKEKKKTRRYDKTIRYETRKARAETRLRVKGRFVKA) constitute a CCT domain.

Belongs to the CONSTANS family.

The protein localises to the nucleus. The chain is Zinc finger protein CONSTANS-LIKE 14 (COL14) from Arabidopsis thaliana (Mouse-ear cress).